The chain runs to 404 residues: Propionate kinase (404 aa).

Belongs to the acetokinase family. PduW subfamily.

The protein localises to the cytoplasm. The catalysed reaction is propanoate + ATP = propanoyl phosphate + ADP. Its pathway is polyol metabolism; 1,2-propanediol degradation. In terms of biological role, works with phosphate acetyltransferase (pta) to capture exogenous propionate and regenerate propionyl-CoA during degradation of 1,2-propanediol (1,2-PD). The sequence is that of Propionate kinase from Citrobacter koseri (strain ATCC BAA-895 / CDC 4225-83 / SGSC4696).